Consider the following 393-residue polypeptide: Pyrimidine monooxygenase RutA (393 aa).

Residues 79 to 80, asparagine 145, glutamate 154, 170 to 171, and serine 220 contribute to the FMN site; these read IK and RY.

This sequence belongs to the NtaA/SnaA/DszA monooxygenase family. RutA subfamily.

The catalysed reaction is uracil + FMNH2 + NADH + O2 = (Z)-3-ureidoacrylate + FMN + NAD(+) + H2O + H(+). The enzyme catalyses thymine + FMNH2 + NADH + O2 = (Z)-2-methylureidoacrylate + FMN + NAD(+) + H2O + H(+). Functionally, catalyzes the pyrimidine ring opening between N-3 and C-4 by an unusual flavin hydroperoxide-catalyzed mechanism, adding oxygen atoms in the process to yield ureidoacrylate peracid, that immediately reacts with FMN forming ureidoacrylate and FMN-N(5)-oxide. The FMN-N(5)-oxide reacts spontaneously with NADH to produce FMN. Requires the flavin reductase RutF to regenerate FMN in vivo. The chain is Pyrimidine monooxygenase RutA from Escherichia coli O139:H28 (strain E24377A / ETEC).